Here is a 284-residue protein sequence, read N- to C-terminus: Avenin-like b11 (284 aa).

The N-terminal stretch at 1–18 is a signal peptide; the sequence is MKVFILALLALTATTAIA.

The protein belongs to the prolamin family. In terms of processing, contains disulfide bonds.

Functionally, seed storage protein. Might be integrated via inter-chain disulfide bonds within the glutenin polymer. This is Avenin-like b11 from Triticum aestivum (Wheat).